The sequence spans 343 residues: MESTPKKAPRSKFPALLVVALALVALVFVIWRVDSAPSTNDAYASADTIDVVPEVSGRIVELAVTDNQAVKQGDLLFRIDPRPYEANLAKAEASLAALDKQIMLTQRSVDAQQFGADSVNATVEKARAAAKQATDTLRRTEPLLKEGFVSAEDVDRARTAQRAAEADLNAVLLQAQSAASAVSGVDALVAQRAAVEADIALTKLHLEMTTVRAPFDGRIISLKTSVGQFASAMRPIFTLIDTRHWYVIANFRETDLKNIRSGTPATIRLMSDSGKTFEGKVDSIGYGVLPDDGGLVLGGLPKVSRSINWVRVAQRFPVKIMVDKPDPEMFRIGASAVANLEPQ.

The Cytoplasmic portion of the chain corresponds to 1–12 (MESTPKKAPRSK). Residues 13–33 (FPALLVVALALVALVFVIWRV) traverse the membrane as a helical; Signal-anchor for type II membrane protein segment. Residues 34–343 (DSAPSTNDAY…ASAVANLEPQ (310 aa)) are Periplasmic-facing.

The protein belongs to the membrane fusion protein (MFP) (TC 8.A.1) family. Could be part of a tripartite efflux system composed of MdtN, MdtO and MdtP.

It localises to the cell inner membrane. Its function is as follows. Could be involved in resistance to puromycin, acriflavine and tetraphenylarsonium chloride. This Shigella flexneri protein is Multidrug resistance protein MdtN (mdtN).